We begin with the raw amino-acid sequence, 317 residues long: Putative ribosomal protein uL10-like (317 aa).

Tyr-24 bears the Phosphotyrosine mark. Thr-59 carries the post-translational modification Phosphothreonine. The disordered stretch occupies residues 292 to 317 (AAAPAKVEAKEESEESDEDMGFGLFD). Lys-297 participates in a covalent cross-link: Glycyl lysine isopeptide (Lys-Gly) (interchain with G-Cter in SUMO1); alternate. Residue Lys-297 forms a Glycyl lysine isopeptide (Lys-Gly) (interchain with G-Cter in SUMO2); alternate linkage. Residues 302 to 311 (EESEESDEDM) show a composition bias toward acidic residues. Ser-304 and Ser-307 each carry phosphoserine.

It belongs to the universal ribosomal protein uL10 family. In terms of assembly, P0 forms a pentameric complex by interaction with dimers of P1 and P2.

Ribosomal protein P0 is the functional equivalent of E.coli protein L10. In Homo sapiens (Human), this protein is Putative ribosomal protein uL10-like (RPLP0P6).